The chain runs to 516 residues: Delta(24)-sterol reductase (516 aa).

The signal sequence occupies residues 1–22; the sequence is MEPAVSLAVCALLFLLWVRVKG. The Lumenal portion of the chain corresponds to 23–31; that stretch reads LEFVLIHQR. A helical transmembrane segment spans residues 32 to 52; that stretch reads WVFVCLFLLPLSLIFDIYYYV. The Cytoplasmic segment spans residues 53–516; it reads RAWVVFKLSS…YDKICKAARH (464 aa). An FAD-binding PCMH-type domain is found at 58–234; that stretch reads FKLSSAPRLH…VAAEIRIIPA (177 aa). An FAD-binding site is contributed by 163-175; that stretch reads TVGGLIMGTGIES.

It belongs to the FAD-binding oxidoreductase/transferase type 4 family. FAD serves as cofactor.

The protein localises to the endoplasmic reticulum membrane. It localises to the golgi apparatus membrane. It carries out the reaction 5alpha-cholest-8-en-3beta-ol + NADP(+) = zymosterol + NADPH + H(+). The enzyme catalyses cholesterol + NADP(+) = desmosterol + NADPH + H(+). It catalyses the reaction lanosterol + NADPH + H(+) = 24,25-dihydrolanosterol + NADP(+). It functions in the pathway steroid biosynthesis; cholesterol biosynthesis. Functionally, catalyzes the reduction of the delta-24 double bond of sterol intermediates during cholesterol biosynthesis. In addition to its cholesterol-synthesizing activity, can protect cells from oxidative stress by reducing caspase 3 activity during apoptosis induced by oxidative stress. Also protects against amyloid-beta peptide-induced apoptosis. The sequence is that of Delta(24)-sterol reductase (Dhcr24) from Mus musculus (Mouse).